A 266-amino-acid chain; its full sequence is MYKRLFISRVILIFALILVISTPNVLAESQPDPMPDDLHKSSEFTGTMGNMKYLYDDHYVSATKVKSVDKFLAHDLIYNISDKKLKNYDKVKTELLNEDLAKKYKDEVVDVYGSNYYVNCYFSSKDNVGKVTGGKTCMYGGITKHEGNHFDNGNLQNVLVRVYENKRNTISFEVQTDKKSVTAQELDIKARNFLINKKNLYEFNSSPYETGYIKFIENNGNTFWYDMMPAPGDKFDQSKYLMMYNDNKTVDSKSVKIEVHLTTKNG.

Positions 1-27 (MYKRLFISRVILIFALILVISTPNVLA) are cleaved as a signal peptide. The Zn(2+) site is built by aspartate 36 and aspartate 110. A disulfide bridge links cysteine 120 with cysteine 137. 2 residues coordinate Zn(2+): histidine 145 and histidine 149.

This sequence belongs to the staphylococcal/streptococcal toxin family. In terms of assembly, interacts with MHC class II molecules composed of alpha/HLA-DRA and beta/HLA-DRB1 chains. Interacts with host T-cell receptor/TCR beta variable chain TRBV8-2.

The protein resides in the secreted. In terms of biological role, staphylococcal enterotoxin that activates the host immune system by binding as unprocessed molecules to major histocompatibility (MHC) complex class II and T-cell receptor (TCR) molecules. In turn, this ternary complex activates a large number of T-lymphocytes initiating a systemic release of pro-inflammatory cytokines. Also causes the intoxication staphylococcal food poisoning syndrome. The chain is Enterotoxin type C-3 (entC3) from Staphylococcus aureus.